The following is a 47-amino-acid chain: Lysis protein for colicin E5 (47 aa).

The N-terminal stretch at 1-19 (MKKITWIILLLLAAIILAA) is a signal peptide. The N-palmitoyl cysteine moiety is linked to residue C20. C20 is lipidated: S-diacylglycerol cysteine.

Its subcellular location is the cell outer membrane. Functionally, lysis proteins are required for both colicin release and partial cell lysis. The polypeptide is Lysis protein for colicin E5 (lys) (Escherichia coli).